A 282-amino-acid chain; its full sequence is Phosphoglycerate mutase-like protein 1 (282 aa).

The active-site Tele-phosphohistidine intermediate is the histidine 23. The active-site Proton donor/acceptor is the glutamate 135.

It belongs to the phosphoglycerate mutase family.

May play a role in carbohydrates metabolism. This Arabidopsis thaliana (Mouse-ear cress) protein is Phosphoglycerate mutase-like protein 1.